Consider the following 241-residue polypeptide: Demethylmenaquinone methyltransferase (241 aa).

S-adenosyl-L-methionine contacts are provided by residues threonine 60, aspartate 81, and 106 to 107 (DA).

This sequence belongs to the class I-like SAM-binding methyltransferase superfamily. MenG/UbiE family.

It carries out the reaction a 2-demethylmenaquinol + S-adenosyl-L-methionine = a menaquinol + S-adenosyl-L-homocysteine + H(+). Its pathway is quinol/quinone metabolism; menaquinone biosynthesis; menaquinol from 1,4-dihydroxy-2-naphthoate: step 2/2. Methyltransferase required for the conversion of demethylmenaquinol (DMKH2) to menaquinol (MKH2). This is Demethylmenaquinone methyltransferase from Staphylococcus carnosus (strain TM300).